Consider the following 262-residue polypeptide: MALLELERISAQYPGASTPVLADINLSLGPRQLLVALGPSGSGKTSLLNLIAGFVAPSGGHITLDGVPVQGPGAERGVVFQDDALLPWQNVLGNVAFGLELAGVPRAQREAKAREMLTLVDLDGFGERRIWQLSGGQKQRVGLARALAADPRVLLMDEPFGALDAFTREQMQELLLQVWQRTAKPVFLITHDIEEAVFLASELVLLAPNPGRVVERLQLNFGQRYAAGESARAIKSDPAFIETREHVLARVFSQRQSLQERA.

Residues 4–233 enclose the ABC transporter domain; it reads LELERISAQY…RYAAGESARA (230 aa). ATP is bound at residue 38-45; the sequence is GPSGSGKT.

Belongs to the ABC transporter superfamily. Taurine importer (TC 3.A.1.17.1) family. In terms of assembly, the complex is composed of two ATP-binding proteins (TauB), two transmembrane proteins (TauC) and a solute-binding protein (TauA).

Its subcellular location is the cell inner membrane. The enzyme catalyses taurine(out) + ATP + H2O = taurine(in) + ADP + phosphate + H(+). In terms of biological role, part of the ABC transporter complex TauABC involved in taurine import. Responsible for energy coupling to the transport system. This is Taurine import ATP-binding protein TauB from Pseudomonas putida (strain ATCC 47054 / DSM 6125 / CFBP 8728 / NCIMB 11950 / KT2440).